The sequence spans 315 residues: Ribose-phosphate pyrophosphokinase (315 aa).

ATP contacts are provided by residues 37 to 39 (DGE) and 96 to 97 (RQ). H131 and D171 together coordinate Mg(2+). K195 is a catalytic residue. D-ribose 5-phosphate-binding positions include R197, D221, and 225–229 (DTGGT).

This sequence belongs to the ribose-phosphate pyrophosphokinase family. Class I subfamily. Homohexamer. The cofactor is Mg(2+).

The protein resides in the cytoplasm. The enzyme catalyses D-ribose 5-phosphate + ATP = 5-phospho-alpha-D-ribose 1-diphosphate + AMP + H(+). Its pathway is metabolic intermediate biosynthesis; 5-phospho-alpha-D-ribose 1-diphosphate biosynthesis; 5-phospho-alpha-D-ribose 1-diphosphate from D-ribose 5-phosphate (route I): step 1/1. Involved in the biosynthesis of the central metabolite phospho-alpha-D-ribosyl-1-pyrophosphate (PRPP) via the transfer of pyrophosphoryl group from ATP to 1-hydroxyl of ribose-5-phosphate (Rib-5-P). In Pasteurella multocida (strain Pm70), this protein is Ribose-phosphate pyrophosphokinase.